The following is a 1114-amino-acid chain: TBC1 domain family member 8B (1114 aa).

GRAM domains lie at 145 to 212 (LKFE…EKTS) and 285 to 353 (EQFK…DKTD). Residues 399–411 (TEVAVSSDSTGPS) are compositionally biased toward polar residues. The segment at 399-420 (TEVAVSSDSTGPSENFEEQPLT) is disordered. The region spanning 486–673 (GIPETLRGEL…NVVDCFFYDG (188 aa)) is the Rab-GAP TBC domain. The 36-residue stretch at 857–892 (NRDSLALWTFRLLDENSDCLINFKEFSSAIDIMYNG) folds into the EF-hand domain. Disordered stretches follow at residues 938 to 957 (SKPADEKETESGRNSPEKGK) and 1032 to 1061 (LHSPASSASTARDSGPSEGNAESSVKKDLP). The segment covering 940 to 957 (PADEKETESGRNSPEKGK) has biased composition (basic and acidic residues).

Interacts (via domain Rab-GAP TBC) with RAB11B (in GTP-bound form).

It is found in the cytoplasm. The protein resides in the cytosol. Its function is as follows. Involved in vesicular recycling, probably as a RAB11B GTPase-activating protein. This is TBC1 domain family member 8B (Tbc1d8b) from Mus musculus (Mouse).